The following is a 208-amino-acid chain: Uracil phosphoribosyltransferase (208 aa).

Residues Arg78, Arg103, and 130–138 (DPMLATGGS) each bind 5-phospho-alpha-D-ribose 1-diphosphate. Residues Ile193 and 198–200 (GDA) contribute to the uracil site. Asp199 contacts 5-phospho-alpha-D-ribose 1-diphosphate.

Belongs to the UPRTase family. Mg(2+) serves as cofactor.

It catalyses the reaction UMP + diphosphate = 5-phospho-alpha-D-ribose 1-diphosphate + uracil. It functions in the pathway pyrimidine metabolism; UMP biosynthesis via salvage pathway; UMP from uracil: step 1/1. Its activity is regulated as follows. Allosterically activated by GTP. In terms of biological role, catalyzes the conversion of uracil and 5-phospho-alpha-D-ribose 1-diphosphate (PRPP) to UMP and diphosphate. The protein is Uracil phosphoribosyltransferase of Actinobacillus succinogenes (strain ATCC 55618 / DSM 22257 / CCUG 43843 / 130Z).